A 278-amino-acid chain; its full sequence is Pantothenate synthetase (278 aa).

28 to 35 (MGNLHAGH) contributes to the ATP binding site. Residue histidine 35 is the Proton donor of the active site. Position 59 (glutamine 59) interacts with (R)-pantoate. Residue glutamine 59 coordinates beta-alanine. 145 to 148 (GKKD) contacts ATP. Position 151 (glutamine 151) interacts with (R)-pantoate. 182–185 (LSSR) serves as a coordination point for ATP.

The protein belongs to the pantothenate synthetase family. In terms of assembly, homodimer.

The protein resides in the cytoplasm. The catalysed reaction is (R)-pantoate + beta-alanine + ATP = (R)-pantothenate + AMP + diphosphate + H(+). It functions in the pathway cofactor biosynthesis; (R)-pantothenate biosynthesis; (R)-pantothenate from (R)-pantoate and beta-alanine: step 1/1. In terms of biological role, catalyzes the condensation of pantoate with beta-alanine in an ATP-dependent reaction via a pantoyl-adenylate intermediate. This chain is Pantothenate synthetase, found in Methylobacillus flagellatus (strain ATCC 51484 / DSM 6875 / VKM B-1610 / KT).